We begin with the raw amino-acid sequence, 202 residues long: Small ribosomal subunit protein uS4c (202 aa).

The S4 RNA-binding domain occupies 90 to 153; it reads MRLDNIIFRL…KSQAIISKNI (64 aa).

This sequence belongs to the universal ribosomal protein uS4 family. Part of the 30S ribosomal subunit. Contacts protein S5. The interaction surface between S4 and S5 is involved in control of translational fidelity.

Its subcellular location is the plastid. It localises to the chloroplast. In terms of biological role, one of the primary rRNA binding proteins, it binds directly to 16S rRNA where it nucleates assembly of the body of the 30S subunit. With S5 and S12 plays an important role in translational accuracy. The chain is Small ribosomal subunit protein uS4c (rps4) from Splachnum sphaericum (Pinkstink dung moss).